The following is a 239-amino-acid chain: RNA-binding protein 38 (239 aa).

In terms of domain architecture, RRM spans 34 to 111; sequence TKIFVGGLPY…RKANVNLAYL (78 aa).

The protein belongs to the RBM38 family.

It is found in the cytoplasm. The protein resides in the cytosol. The protein localises to the nucleus. Functionally, RNA-binding protein that specifically bind the 3'-UTR of CDKN1A transcripts, leading to maintain the stability of CDKN1A transcripts, thereby acting as a mediator of the p53/TP53 family to regulate CDKN1A. CDKN1A is a cyclin-dependent kinase inhibitor transcriptionally regulated by the p53/TP53 family to induce cell cycle arrest. Isoform 1, but not isoform 2, has the ability to induce cell cycle arrest in G1 and maintain the stability of CDKN1A transcripts induced by p53/TP53. Also acts as a mRNA splicing factor. Specifically regulates the expression of FGFR2-IIIb, an epithelial cell-specific isoform of FGFR2. Plays a role in myogenic differentiation. (Microbial infection) Essential factor for the splicing of the pre-mRNAs of human parvovirus B19 (B19V) and for the expression of B19V 11-kDa protein, which enhances viral replication. This Homo sapiens (Human) protein is RNA-binding protein 38 (RBM38).